Consider the following 361-residue polypeptide: MIPKEEIMGIFEKYNKDEVTIVTVGSHTSLHILKGAKLEGFSTAVITTKDRAIPYKRFGVADKFIYVDQFSDISKEEIQQQLRDMNAIIVPHGSFIAYCGLDNVEDSFKVPMFGNRAILRWEAERDLEGQLLGESGLRIPKKYGGPDDIDGPVMVKFPGARGGRGYFPCSTVEEFWRKIAEFKAKGILTEDDVKKAHIEEYVVGANYCIHYFYSPLKDQVELMGIDRRYESSIDGLVRVPAKDQLELNVDPSYVITGNFPVVIRESLLPQVFDIGDKLSAKSKELVKPGMLGPFCLQSLCNDNLELVVFEMSARVDGGTNTFMNGSPYSCLYTGEPLSMGQRIAKEIKLALELGMIDKVLS.

5-amino-1-(5-phospho-beta-D-ribosyl)imidazole-4-carboxamide-binding residues include His-27 and Ser-94. In terms of domain architecture, ATP-grasp spans 116-348; it reads RAILRWEAER…MGQRIAKEIK (233 aa). Residues 146–208 and Glu-230 each bind ATP; that span reads PDDI…ANYC. Asn-258 contacts 5-amino-1-(5-phospho-beta-D-ribosyl)imidazole-4-carboxamide. Positions 297 and 310 each coordinate Mg(2+).

The protein belongs to the phosphohexose mutase family. Mg(2+) serves as cofactor. Mn(2+) is required as a cofactor.

It catalyses the reaction 5-amino-1-(5-phospho-beta-D-ribosyl)imidazole-4-carboxamide + formate + ATP = 5-formamido-1-(5-phospho-D-ribosyl)imidazole-4-carboxamide + ADP + phosphate. It participates in purine metabolism; IMP biosynthesis via de novo pathway; 5-formamido-1-(5-phospho-D-ribosyl)imidazole-4-carboxamide from 5-amino-1-(5-phospho-D-ribosyl)imidazole-4-carboxamide (formate route): step 1/1. Its function is as follows. Catalyzes the ATP- and formate-dependent formylation of 5-aminoimidazole-4-carboxamide-1-beta-d-ribofuranosyl 5'-monophosphate (AICAR) to 5-formaminoimidazole-4-carboxamide-1-beta-d-ribofuranosyl 5'-monophosphate (FAICAR) in the absence of folates. In Methanococcus maripaludis (strain C5 / ATCC BAA-1333), this protein is 5-formaminoimidazole-4-carboxamide-1-(beta)-D-ribofuranosyl 5'-monophosphate synthetase.